Consider the following 265-residue polypeptide: MLTLEASQLDGPHPSYMFSDSSFYDLDSCKPLPTFPHCLMEAEPPTDPCAGWLELAEPGYEPFDSGQLAPLHTVTVPYGHGPYPPAPSDAIYSLEGPLPAPSHCPVLPEEYGAQPYTLYSPCPLPSTPLSEDDDFPTDAPALEVSDSDSDENLSPGGSLDLDSGSRRKLRLYQFLLGLLQRGDMQECVWWVEHDSGVFQFSSKHKEALAHRWGQQKGNRKAMTYQKMARALRNYGKTGEIRKVKKKLTYQFGHKLLGLSGPRAPS.

The tract at residues 1–31 (MLTLEASQLDGPHPSYMFSDSSFYDLDSCKP) is TAD1 (Acidic). The TAD2 stretch occupies residues 42 to 63 (AEPPTDPCAGWLELAEPGYEPF). Positions 127-160 (TPLSEDDDFPTDAPALEVSDSDSDENLSPGGSLD) are disordered. A DNA-binding region (ETS) is located at residues 169-252 (LRLYQFLLGL…VKKKLTYQFG (84 aa)).

It belongs to the ETS family.

Its subcellular location is the nucleus. In terms of biological role, may act as a sequence specific transcriptional activator. The sequence is that of Transcription factor Spi-B-like from Paleosuchus palpebrosus (Cuvier's smooth-fronted caiman).